The sequence spans 257 residues: Diacetyl reductase [(S)-acetoin forming] (257 aa).

6-30 (IITGSAGGLGKGIAERLANDGFNIV) contributes to the NAD(+) binding site. Residue Ser139 participates in substrate binding. The Proton acceptor role is filled by Tyr152. Residue Lys156 is part of the active site.

The protein belongs to the short-chain dehydrogenases/reductases (SDR) family.

It catalyses the reaction (S)-acetoin + NAD(+) = diacetyl + NADH + H(+). Functionally, catalyzes the irreversible reduction of 2,3-butanediol to (S)-acetoin in the presence of NADH. The protein is Diacetyl reductase [(S)-acetoin forming] (butA) of Staphylococcus epidermidis (strain ATCC 35984 / DSM 28319 / BCRC 17069 / CCUG 31568 / BM 3577 / RP62A).